The chain runs to 603 residues: Laccase 1 (603 aa).

A signal peptide spans 1 to 20 (MSRFARLLLIVALFFTNAWA). 2 consecutive Plastocyanin-like domains span residues 66 to 108 (QRPI…IHIR) and 159 to 349 (LVVS…MRIP). Cu cation contacts are provided by His-90 and His-92. Asn-246, Asn-269, Asn-434, and Asn-474 each carry an N-linked (GlcNAc...) asparagine glycan. Positions 460–588 (TRDTENDGLV…GGMGIAILDG (129 aa)) constitute a Plastocyanin-like 3 domain. Cu cation contacts are provided by His-496, His-499, and His-501. N-linked (GlcNAc...) asparagine glycosylation occurs at Asn-516. Positions 570, 571, 572, and 576 each coordinate Cu cation.

This sequence belongs to the multicopper oxidase family. It depends on Cu cation as a cofactor.

It is found in the cell surface. The protein operates within pigment biosynthesis. Its function is as follows. Laccase; part of the Pks1 gene cluster that mediates the biosynthesis of an anthraquinone derivative pigment that contributes to conidial pigmentation that provides protection from UV radiation, heat and cold stress. The polyketide synthase Pks1 produces 1-acetyl-2,4,6,8-tetrahydroxy-9,10-anthraquinone though condensation of acetyl-CoA with malonyl-CoA. The dehydratase EthD and the laccase Mlac1 further convert the anthraquinone derivative into the final conidial pigment. The polypeptide is Laccase 1 (Metarhizium anisopliae (Entomophthora anisopliae)).